A 275-amino-acid chain; its full sequence is Large ribosomal subunit protein uL2 (275 aa).

The interval 227–261 (PVDHPHGGGEAKSGQGNPHPVTPWGVPTKGYKTRK) is disordered.

It belongs to the universal ribosomal protein uL2 family. In terms of assembly, part of the 50S ribosomal subunit. Forms a bridge to the 30S subunit in the 70S ribosome.

Its function is as follows. One of the primary rRNA binding proteins. Required for association of the 30S and 50S subunits to form the 70S ribosome, for tRNA binding and peptide bond formation. It has been suggested to have peptidyltransferase activity; this is somewhat controversial. Makes several contacts with the 16S rRNA in the 70S ribosome. This chain is Large ribosomal subunit protein uL2, found in Xylella fastidiosa (strain M23).